A 120-amino-acid polypeptide reads, in one-letter code: Spermidine export protein MdtJ (120 aa).

Transmembrane regions (helical) follow at residues 1–21, 31–51, 54–74, and 81–101; these read MFYWILLALAIATEITGTLSM, AGFILMLVMITLSYIFLSFAV, IALGVAYALWEGIGILFITIF, and EALSTMKIAGLLTLVAGIVLI.

The protein belongs to the drug/metabolite transporter (DMT) superfamily. Small multidrug resistance (SMR) (TC 2.A.7.1) family. MdtJ subfamily. As to quaternary structure, forms a complex with MdtI.

It localises to the cell inner membrane. In terms of biological role, catalyzes the excretion of spermidine. In Salmonella paratyphi A (strain ATCC 9150 / SARB42), this protein is Spermidine export protein MdtJ.